Consider the following 291-residue polypeptide: Ajmaline N-methyltransferase (291 aa).

The segment at Met-71–Gly-80 is SAM motif I. The Vacuolar targeting signal motif lies at Asp-133–Val-139. Residues Gly-134–Ile-142 form an SAM motif II region. Residues Val-161–Ile-170 form an SAM motif III region.

Belongs to the class I-like SAM-binding methyltransferase superfamily. gTMT family. In terms of assembly, homodimer. As to expression, mainly expressed in roots, but barely detectable in stems and flowers.

The protein localises to the vacuole membrane. The catalysed reaction is ajmaline + S-adenosyl-L-methionine = 4-methylajmaline + S-adenosyl-L-homocysteine + H(+). It catalyses the reaction norajmaline + S-adenosyl-L-methionine = 4-methylnorajmaline + S-adenosyl-L-homocysteine + H(+). It functions in the pathway alkaloid biosynthesis; ajmaline biosynthesis. Its function is as follows. N-methyltransferase involved in the biosynthesis of ajmaline-type monoterpenoid indole alkaloids (MIAs) natural products, important plant-derived pharmaceuticals used in the therapy of heart disorders. Catalyzes the indole N-methylation of ajmaline to produce 4-methylajmaline. Also able, with a lower efficiency, to mediates the conversion of norajmaline to 4-methylnorajmaline. The polypeptide is Ajmaline N-methyltransferase (Rauvolfia serpentina (Serpentine wood)).